Consider the following 105-residue polypeptide: MSKIHVRKKDTVVVISGKDKGKIGEVLSVLPKKGKVIVKDVNVVTKHQKPNRENMQGGIIHKEAPIFSSKVMLYCDKCKSATRISNKILEDGTKVRVCKKCGETF.

The protein belongs to the universal ribosomal protein uL24 family. As to quaternary structure, part of the 50S ribosomal subunit.

In terms of biological role, one of two assembly initiator proteins, it binds directly to the 5'-end of the 23S rRNA, where it nucleates assembly of the 50S subunit. Its function is as follows. One of the proteins that surrounds the polypeptide exit tunnel on the outside of the subunit. This Clostridium botulinum (strain Langeland / NCTC 10281 / Type F) protein is Large ribosomal subunit protein uL24.